The sequence spans 329 residues: Interferon regulatory factor 1 (329 aa).

The IRF tryptophan pentad repeat DNA-binding region spans 5 to 113 (RMRMRPWLEM…SAVRVYRMLP (109 aa)). The residue at position 78 (Lys78) is an N6-acetyllysine. A disordered region spans residues 93 to 166 (EVKDQSRNKG…LPDDHSSYTT (74 aa)). The span at 146–166 (DTFSDGLSSSTLPDDHSSYTT) shows a compositional bias: polar residues. Residues Lys276 and Lys300 each participate in a glycyl lysine isopeptide (Lys-Gly) (interchain with G-Cter in SUMO) cross-link.

The protein belongs to the IRF family. As to quaternary structure, monomer. Homodimer. Interacts with EP300. Interacts with MYD88. Interacts with PIAS3. Interacts with SPOP. Post-translationally, phosphorylated by CK2 and this positively regulates its activity. Ubiquitinated in a SPOP-depedent manner. Sumoylation represses the transcriptional activity and displays enhanced resistance to protein degradation. Sumoylated by UBE2I/UBC9 and SUMO1. Inactivates the tumor suppressor activity. Elevated levels in tumor cells. Major site is Lys-276. Sumoylation is enhanced by PIAS3. Desumoylated by SENP1 in tumor cells and appears to compete with ubiquitination on C-terminal sites. In terms of processing, ubiquitinated. Appears to compete with sumoylation on C-terminal sites.

The protein localises to the nucleus. Its subcellular location is the cytoplasm. With respect to regulation, activated by MYD88. Transcriptional regulator which displays a remarkable functional diversity in the regulation of cellular responses. Regulates transcription of IFN and IFN-inducible genes, host response to viral and bacterial infections, regulation of many genes expressed during hematopoiesis, inflammation, immune responses and cell proliferation and differentiation, regulation of the cell cycle and induction of growth arrest and programmed cell death following DNA damage. Stimulates both innate and acquired immune responses through the activation of specific target genes and can act as a transcriptional activator and repressor regulating target genes by binding to an interferon-stimulated response element (ISRE) in their promoters. Has an essentail role in IFNG-dependent immunity to mycobacteria. Binds to a consensus sequence in gene promoters. Its target genes for transcriptional activation activity are: genes involved in anti-viral response, such as IFN-alpha/beta, RIGI, TNFSF10/TRAIL, ZBP1, OAS1/2, PIAS1/GBP, EIF2AK2/PKR and RSAD2/viperin; antibacterial response, such as GBP2, GBP5, IRGB10 and NOS2/INOS; anti-proliferative response, such as p53/TP53, LOX and CDKN1A; apoptosis, such as BBC3/PUMA, CASP1, CASP7 and CASP8; immune response, such as IL7, IL12A/B and IL15, PTGS2/COX2 and CYBB; DNA damage responses and DNA repair, such as POLQ/POLH; MHC class I expression, such as TAP1, PSMB9/LMP2, PSME1/PA28A, PSME2/PA28B and B2M and MHC class II expression, such as CIITA; metabolic enzymes, such as ACOD1/IRG1. Represses genes involved in anti-proliferative response, such as BIRC5/survivin, CCNB1, CCNE1, CDK1, CDK2 and CDK4 and in immune response, such as FOXP3, IL4, ANXA2 and TLR4. Stimulates p53/TP53-dependent transcription through enhanced recruitment of EP300 leading to increased acetylation of p53/TP53. Plays an important role in immune response directly affecting NK maturation and activity, macrophage production of IL12, Th1 development and maturation of CD8+ T-cells. Also implicated in the differentiation and maturation of dendritic cells and in the suppression of regulatory T (Treg) cells development. Acts as a tumor suppressor and plays a role not only in antagonism of tumor cell growth but also in stimulating an immune response against tumor cells. The sequence is that of Interferon regulatory factor 1 (Irf1) from Mus musculus (Mouse).